The primary structure comprises 391 residues: Na(+)/H(+) antiporter NhaA 2 (391 aa).

A run of 11 helical transmembrane segments spans residues 25–45, 56–76, 98–118, 128–148, 157–177, 180–200, 208–228, 264–284, 297–317, 335–355, and 364–384; these read AGGI…NSPL, VWLG…IFFL, ALPG…YIAI, GWAI…SLLG, VFLA…IAFF, SGLN…LVAL, LLPY…SGVH, VAFA…LSGI, VALG…VLAI, GVAI…NLAF, and EVKV…IVLL.

This sequence belongs to the NhaA Na(+)/H(+) (TC 2.A.33) antiporter family.

Its subcellular location is the cell inner membrane. The enzyme catalyses Na(+)(in) + 2 H(+)(out) = Na(+)(out) + 2 H(+)(in). Its function is as follows. Na(+)/H(+) antiporter that extrudes sodium in exchange for external protons. The chain is Na(+)/H(+) antiporter NhaA 2 from Pseudomonas syringae pv. tomato (strain ATCC BAA-871 / DC3000).